The sequence spans 780 residues: Replication origin-binding protein (780 aa).

The region spanning 39-195 is the Helicase ATP-binding domain; that stretch reads SFENVRQPIK…AAFKPDTQIA (157 aa). An ATP-binding site is contributed by 52-59; the sequence is AAMGSGKT.

It belongs to the herpesviridae OriBP family.

Its function is as follows. Probably involved in DNA replication. Binds the origin of replication (ori). The protein is Replication origin-binding protein (U73) of Human herpesvirus 6A (strain Uganda-1102) (HHV-6 variant A).